We begin with the raw amino-acid sequence, 360 residues long: Histidinol-phosphate aminotransferase (360 aa).

An N6-(pyridoxal phosphate)lysine modification is found at Lys-213.

This sequence belongs to the class-II pyridoxal-phosphate-dependent aminotransferase family. Histidinol-phosphate aminotransferase subfamily. Homodimer. Requires pyridoxal 5'-phosphate as cofactor.

It carries out the reaction L-histidinol phosphate + 2-oxoglutarate = 3-(imidazol-4-yl)-2-oxopropyl phosphate + L-glutamate. It participates in amino-acid biosynthesis; L-histidine biosynthesis; L-histidine from 5-phospho-alpha-D-ribose 1-diphosphate: step 7/9. In Baumannia cicadellinicola subsp. Homalodisca coagulata, this protein is Histidinol-phosphate aminotransferase.